The primary structure comprises 381 residues: Homoserine O-succinyltransferase (381 aa).

One can recognise an AB hydrolase-1 domain in the interval 45–360 (NAVLVCHALN…PHGHDAFLLD (316 aa)). Ser151 acts as the Nucleophile in catalysis. Arg221 is a binding site for substrate. Residues Asp321 and His354 contribute to the active site. A substrate-binding site is contributed by Asp355.

The protein belongs to the AB hydrolase superfamily. MetX family. In terms of assembly, homodimer.

The protein localises to the cytoplasm. The enzyme catalyses L-homoserine + succinyl-CoA = O-succinyl-L-homoserine + CoA. It participates in amino-acid biosynthesis; L-methionine biosynthesis via de novo pathway; O-succinyl-L-homoserine from L-homoserine: step 1/1. Functionally, transfers a succinyl group from succinyl-CoA to L-homoserine, forming succinyl-L-homoserine. The chain is Homoserine O-succinyltransferase from Burkholderia thailandensis (strain ATCC 700388 / DSM 13276 / CCUG 48851 / CIP 106301 / E264).